Reading from the N-terminus, the 70-residue chain is MVSVCRPWPAVAIALLALLVCLGALVDTCPIKPEAPGEDESLEELSHYYASLCHYLNVVTRQWWEGADMW.

The N-terminal stretch at 1–23 (MVSVCRPWPAVAIALLALLVCLG) is a signal peptide.

Belongs to the NPY family.

The protein resides in the secreted. This chain is Putative peptide YY-3 (PYY3), found in Homo sapiens (Human).